A 143-amino-acid polypeptide reads, in one-letter code: Hemoglobin subunit alpha (143 aa).

At S2 the chain carries N-acetylserine. Positions 2–143 (SLSDKDKAAV…LALALSEKYR (142 aa)) constitute a Globin domain. Residue H60 coordinates O2. H89 serves as a coordination point for heme b.

Belongs to the globin family. Heterotetramer of two alpha chains and two beta chains. As to expression, red blood cells.

Functionally, involved in oxygen transport from gills to the various peripheral tissues. The chain is Hemoglobin subunit alpha (hba) from Cyprinus carpio (Common carp).